Here is a 485-residue protein sequence, read N- to C-terminus: Serine/threonine-protein kinase 4 (485 aa).

The Protein kinase domain occupies 30–281 (FDVLEKLGEG…ATELLQHPFI (252 aa)). ATP is bound by residues 36 to 44 (LGEGSYGSV) and lysine 59. Aspartate 149 serves as the catalytic Proton acceptor. Threonine 183 carries the phosphothreonine; by autocatalysis modification. One can recognise an SARAH domain in the interval 431–478 (YSFLKDWSVAEVQLKLNSLDPMMEREIEEIHHKYQAKRQPILEAIESK).

Belongs to the protein kinase superfamily. STE Ser/Thr protein kinase family. STE20 subfamily. In terms of assembly, homodimer; mediated via the coiled-coil region. Mg(2+) is required as a cofactor. Autophosphorylated on Thr-183. In terms of processing, proteolytically cleaved by caspase-3 during apoptosis at Asp-326 resulting in a 37 kDa form. Proteolytic cleavage results in kinase activation and nuclear translocation of the truncated form (MST1/N).

It localises to the cytoplasm. The protein resides in the nucleus. It carries out the reaction L-seryl-[protein] + ATP = O-phospho-L-seryl-[protein] + ADP + H(+). The catalysed reaction is L-threonyl-[protein] + ATP = O-phospho-L-threonyl-[protein] + ADP + H(+). With respect to regulation, the C-terminal non-catalytic region inhibits the kinase activity, the enzyme is activated by caspase-cleavage. Homodimerization and autophosphorylation of Thr-183 is also required for full activation. Stress-activated, pro-apoptotic kinase which, following caspase-cleavage, enters the nucleus and induces chromatin condensation followed by internucleosomal DNA fragmentation. Key component of the Hippo signaling pathway which plays a pivotal role in organ size control and tumor suppression by restricting proliferation and promoting apoptosis. The core of this pathway is composed of a kinase cascade wherein stk3/mst2 and stk4/mst1, in complex with its regulatory protein sav1, phosphorylates and activates lats1/2 in complex with its regulatory protein mob1, which in turn phosphorylates and inactivates yap1 oncoprotein and wwtr1/taz. Phosphorylation of yap1 by lats2 inhibits its translocation into the nucleus to regulate cellular genes important for cell proliferation, cell death, and cell migration. Phosphorylates 'Ser-14' of histone H2B (H2BS14ph) during apoptosis. The protein is Serine/threonine-protein kinase 4 (stk4) of Xenopus laevis (African clawed frog).